We begin with the raw amino-acid sequence, 264 residues long: Proteasome assembly chaperone 2 (264 aa).

Thr137 is subject to Phosphothreonine.

It belongs to the PSMG2 family. Forms a heterodimer with PSMG1. The PSMG1-PSMG2 heterodimer interacts directly with the PSMA5 and PSMA7 proteasome alpha subunits. Degraded by the proteasome upon completion of 20S proteasome maturation.

It is found in the nucleus. Chaperone protein which promotes assembly of the 20S proteasome as part of a heterodimer with PSMG1. The PSMG1-PSMG2 heterodimer binds to the PSMA5 and PSMA7 proteasome subunits, promotes assembly of the proteasome alpha subunits into the heteroheptameric alpha ring and prevents alpha ring dimerization. The protein is Proteasome assembly chaperone 2 of Mus musculus (Mouse).